The primary structure comprises 83 residues: Exodeoxyribonuclease 7 small subunit (83 aa).

Belongs to the XseB family. As to quaternary structure, heterooligomer composed of large and small subunits.

The protein resides in the cytoplasm. The enzyme catalyses Exonucleolytic cleavage in either 5'- to 3'- or 3'- to 5'-direction to yield nucleoside 5'-phosphates.. Bidirectionally degrades single-stranded DNA into large acid-insoluble oligonucleotides, which are then degraded further into small acid-soluble oligonucleotides. The polypeptide is Exodeoxyribonuclease 7 small subunit (Heliobacterium modesticaldum (strain ATCC 51547 / Ice1)).